Consider the following 188-residue polypeptide: dCTP deaminase (188 aa).

DCTP-binding positions include Lys-111–Arg-116, Thr-135–Glu-137, Gln-156, Tyr-170, and Gln-180. Residue Glu-137 is the Proton donor/acceptor of the active site.

Belongs to the dCTP deaminase family. Homotrimer.

It catalyses the reaction dCTP + H2O + H(+) = dUTP + NH4(+). The protein operates within pyrimidine metabolism; dUMP biosynthesis; dUMP from dCTP (dUTP route): step 1/2. Functionally, catalyzes the deamination of dCTP to dUTP. The chain is dCTP deaminase from Thioalkalivibrio sulfidiphilus (strain HL-EbGR7).